Consider the following 451-residue polypeptide: Trigger factor (451 aa).

The 86-residue stretch at 165–250 folds into the PPIase FKBP-type domain; that stretch reads DDKLTIDFEG…LHQIQAREAL (86 aa).

Belongs to the FKBP-type PPIase family. Tig subfamily.

Its subcellular location is the cytoplasm. It carries out the reaction [protein]-peptidylproline (omega=180) = [protein]-peptidylproline (omega=0). Functionally, involved in protein export. Acts as a chaperone by maintaining the newly synthesized protein in an open conformation. Functions as a peptidyl-prolyl cis-trans isomerase. This chain is Trigger factor, found in Helicobacter pylori (strain HPAG1).